The primary structure comprises 204 residues: Tic20 family protein Ycf60 (204 aa).

Transmembrane regions (helical) follow at residues 5–25 (LPSLIIIMLTTFSIILISFII), 87–107 (LMPLVIFYVTHPTLAVIIFFI), 133–153 (ILLFLINSLLGATFRALPIEF), and 159–179 (GLMMCNTLFWFVLSTISYSII).

It belongs to the Tic20 family.

The protein localises to the plastid. Its subcellular location is the chloroplast membrane. In Gracilaria tenuistipitata var. liui (Red alga), this protein is Tic20 family protein Ycf60 (ycf60).